The following is an 826-amino-acid chain: Zinc phosphodiesterase ELAC protein 2 (826 aa).

Residues 1–16 (MWALCSLLRSATGRTM) constitute a mitochondrion transit peptide. Residues 15 to 27 (TMSQGRTISQGSA) show a composition bias toward polar residues. Disordered regions lie at residues 15–53 (TMSQ…GSSG) and 187–231 (SEQR…VSQR). 6 positions are modified to phosphoserine: S199, S208, S212, S229, S618, and S736. Over residues 208 to 224 (SPERSSDSESNESEPHL) the composition is skewed to basic and acidic residues. Residues 798-826 (ALTDDLEDGEPQQKRAHTEEPQSKKVRAQ) are disordered. Over residues 808–820 (PQQKRAHTEEPQS) the composition is skewed to basic and acidic residues.

This sequence belongs to the RNase Z family. As to quaternary structure, homodimer. Interacts with PTCD1. Zn(2+) serves as cofactor.

It is found in the mitochondrion. The protein localises to the mitochondrion matrix. It localises to the mitochondrion nucleoid. Its subcellular location is the nucleus. The catalysed reaction is Endonucleolytic cleavage of RNA, removing extra 3' nucleotides from tRNA precursor, generating 3' termini of tRNAs. A 3'-hydroxy group is left at the tRNA terminus and a 5'-phosphoryl group is left at the trailer molecule.. Zinc phosphodiesterase, which displays mitochondrial tRNA 3'-processing endonuclease activity. Involved in tRNA maturation, by removing a 3'-trailer from precursor tRNA. Associates with mitochondrial DNA complexes at the nucleoids to initiate RNA processing and ribosome assembly. This Macaca fascicularis (Crab-eating macaque) protein is Zinc phosphodiesterase ELAC protein 2 (ELAC2).